The following is a 236-amino-acid chain: Purine nucleoside phosphorylase DeoD-type 2 (236 aa).

Residue His5 coordinates a purine D-ribonucleoside. Residues Gly21, Arg25, Arg44, and 88-91 (RVGS) each bind phosphate. A purine D-ribonucleoside-binding positions include 180 to 182 (DME) and 204 to 205 (SD). Asp205 acts as the Proton donor in catalysis.

Belongs to the PNP/UDP phosphorylase family. In terms of assembly, homohexamer; trimer of homodimers.

It catalyses the reaction a purine D-ribonucleoside + phosphate = a purine nucleobase + alpha-D-ribose 1-phosphate. It carries out the reaction a purine 2'-deoxy-D-ribonucleoside + phosphate = a purine nucleobase + 2-deoxy-alpha-D-ribose 1-phosphate. Catalyzes the reversible phosphorolytic breakdown of the N-glycosidic bond in the beta-(deoxy)ribonucleoside molecules, with the formation of the corresponding free purine bases and pentose-1-phosphate. The protein is Purine nucleoside phosphorylase DeoD-type 2 of Vibrio vulnificus (strain CMCP6).